Here is a 208-residue protein sequence, read N- to C-terminus: DNA-binding protein HupB (208 aa).

The tract at residues 1 to 90 (MNKAELIDVL…PGAQFKAVIS (90 aa)) is bacterial histone-like domain. Residue Lys3 is modified to N6-acetyllysine. Position 3 is an N6-acetyllysine; alternate; partial (Lys3). The residue at position 3 (Lys3) is an N6-methyllysine; alternate; partial. Residue Lys72 is modified to N6-acetyllysine; partial. An N6-methyllysine; partial modification is found at Lys86. The interval 92–208 (AQKLPADGPA…KKAPAKKGRR (117 aa)) is C-terminus, required for nucleoid localization. 2 positions are modified to N6-acetyllysine; alternate; partial: Lys94 and Lys103. N6-methyllysine; alternate; partial occurs at positions 94 and 103. The disordered stretch occupies residues 96–208 (PADGPAVKRG…KKAPAKKGRR (113 aa)). A degenerate repeats region region spans residues 101–205 (AVKRGVTAGP…AAAKKAPAKK (105 aa)). Residues 113–208 (KAAKKAPAKK…KKAPAKKGRR (96 aa)) are compositionally biased toward basic residues. N6-acetyllysine is present on residues Lys116, Lys136, Lys149, and Lys168.

Belongs to the bacterial histone-like protein family. Long actinobacterial subfamily. May form oligomers. Interacts with RNase E (rne). In addition to the identifed modifications, is also methylated on one of Arg-53; Arg-54 or Arg-55.

It localises to the cytoplasm. Its subcellular location is the nucleoid. The protein resides in the secreted. It is found in the cell wall. It catalyses the reaction 4 Fe(2+) + O2 + 4 H(+) = 4 Fe(3+) + 2 H2O. Trans-stilbene derivative 4,4'-[(E)-ethene-1,2 diylbis({5[(phenylcarbonyl)amino]benzene-2,1-diyl}sulfonylimino)] dibenzoic acid (SD1) inhibits DNA binding at 50 uM. SD1 does not inhibit growth in a range of 3-1600 uM. Its function is as follows. A nucleoid-associated protein (NAP) that plays a crucial role in local chromosome architecture. Helps organize newly replicated oriC proximal regions and contributes to the timing of replication initiation and coordinating replication with chromosome segregation. There are between 30,000-60,000 molecules in a log phase cell; the protein-DNA complex is dynamic during the cell cycle, with more complexes near the cell ends. Binds irregularly along the chromosome with higher binding near the origin of replication (oriC) and lowest binding near the chromosome terminus (ter). Binds DNA non-sequence specifically via both its N- and C-terminal domains with high affinity, has no preference for linear or supercoiled DNA. Binds four-way junction DNA. Represses T7 RNA polymerase in vitro. The C-terminal domain enhances DNA end-joining in vitro in the presence of T4 DNA ligase. RNase E and HupB jointly contribute to cellular adaptation to changing growth conditions and survival during antibiotic treatment. Functionally, has ferroxidase activity, converts Fe(2+) into Fe(3+). Binds Fe(3+) but not Fe(2+); prevents the generation of hydroxyl radicals by the Fenton reaction and thus protects DNA from damage. May function in iron storage. Plays a role in epigenetic resistance to antibiotics. Growth on levels of isoniazid (INH) near the minimal inhibitory concentration (MIC) kills most bacteria. The surviving cells grow as either large or small colony variants (SCV), evidence suggest SCVs are associated with persistent infections. Mutating this protein leads to specific loss of SCVs. In terms of biological role, may play a role in cell wall assembly. This is DNA-binding protein HupB from Mycolicibacterium smegmatis (strain ATCC 700084 / mc(2)155) (Mycobacterium smegmatis).